The chain runs to 356 residues: 1-deoxy-D-xylulose 5-phosphate reductoisomerase (356 aa).

NADPH-binding residues include Thr7, Gly8, Ser9, Ile10, Gly31, Asn33, and Asn111. Lys112 lines the 1-deoxy-D-xylulose 5-phosphate pocket. Glu113 provides a ligand contact to NADPH. A Mn(2+)-binding site is contributed by Asp131. Ser132, Glu133, Ser155, and His178 together coordinate 1-deoxy-D-xylulose 5-phosphate. Glu133 contributes to the Mn(2+) binding site. Position 184 (Gly184) interacts with NADPH. 1-deoxy-D-xylulose 5-phosphate contacts are provided by Ser191, Asn196, Lys197, and Glu200. Position 200 (Glu200) interacts with Mn(2+).

The protein belongs to the DXR family. Mg(2+) is required as a cofactor. Mn(2+) serves as cofactor.

It carries out the reaction 2-C-methyl-D-erythritol 4-phosphate + NADP(+) = 1-deoxy-D-xylulose 5-phosphate + NADPH + H(+). It functions in the pathway isoprenoid biosynthesis; isopentenyl diphosphate biosynthesis via DXP pathway; isopentenyl diphosphate from 1-deoxy-D-xylulose 5-phosphate: step 1/6. Its function is as follows. Catalyzes the NADPH-dependent rearrangement and reduction of 1-deoxy-D-xylulose-5-phosphate (DXP) to 2-C-methyl-D-erythritol 4-phosphate (MEP). The chain is 1-deoxy-D-xylulose 5-phosphate reductoisomerase from Campylobacter jejuni subsp. doylei (strain ATCC BAA-1458 / RM4099 / 269.97).